The following is a 443-amino-acid chain: Protein FAM83A (443 aa).

The segment at 311 to 403 (DSGVSVMTDS…YYQRNYAPDS (93 aa)) is disordered. A compositionally biased stretch (polar residues) spans 315–326 (SVMTDSTPESVN). Low complexity-rich tracts occupy residues 327–344 (TTSE…SNDS) and 388–399 (SNYQPNYYQRNY).

This sequence belongs to the FAM83 family.

The protein localises to the cytoplasm. In terms of biological role, may function in the epidermal growth factor receptor/EGFR signaling pathway. In Xenopus laevis (African clawed frog), this protein is Protein FAM83A.